The sequence spans 246 residues: tRNA (guanine-N(1)-)-methyltransferase (246 aa).

S-adenosyl-L-methionine is bound by residues G113 and 132 to 137 (LGDYVL).

This sequence belongs to the RNA methyltransferase TrmD family. Homodimer.

It is found in the cytoplasm. The enzyme catalyses guanosine(37) in tRNA + S-adenosyl-L-methionine = N(1)-methylguanosine(37) in tRNA + S-adenosyl-L-homocysteine + H(+). Its function is as follows. Specifically methylates guanosine-37 in various tRNAs. The protein is tRNA (guanine-N(1)-)-methyltransferase of Lactiplantibacillus plantarum (strain ATCC BAA-793 / NCIMB 8826 / WCFS1) (Lactobacillus plantarum).